The chain runs to 379 residues: Forkhead box protein E1 (379 aa).

The span at 1 to 11 (MTAESQQSPTR) shows a compositional bias: polar residues. The segment at 1–65 (MTAESQQSPT…RRRKRPLQKG (65 aa)) is disordered. Residues 54-63 (KGRRRKRPLQ) are compositionally biased toward basic residues. The segment at residues 66–160 (KPPYSYIALI…DSGSFLRRRK (95 aa)) is a DNA-binding region (fork-head). A disordered region spans residues 239–265 (HSGSEHAQPPNRSISPEVNSTSSSSCN). The segment covering 251 to 265 (SISPEVNSTSSSSCN) has biased composition (low complexity).

In terms of tissue distribution, first expressed at late neural tube and early tailbud stages in the hypophyseal placode. Expression continues in the developing pituitary at late tailbud stages. As development progresses, expressed in the mesoderm of the branchial arches. At stage 38, expressed in the developing thyroid and in the pharyngeal endoderm.

The protein resides in the nucleus. Its function is as follows. Transcription factor that binds consensus sites on a variety of gene promoters and activate their transcription. This chain is Forkhead box protein E1, found in Xenopus laevis (African clawed frog).